The chain runs to 445 residues: Probable aminotransferase TAT3 (445 aa).

Belongs to the class-I pyridoxal-phosphate-dependent aminotransferase family. Requires pyridoxal 5'-phosphate as cofactor. Expressed in roots, leaves and cauline leaves.

The polypeptide is Probable aminotransferase TAT3 (TAT3) (Arabidopsis thaliana (Mouse-ear cress)).